The following is a 264-amino-acid chain: Thymidylate synthase (264 aa).

DUMP is bound at residue Arg21. His51 contacts (6R)-5,10-methylene-5,6,7,8-tetrahydrofolate. Residue 126–127 (RR) coordinates dUMP. Cys146 functions as the Nucleophile in the catalytic mechanism. DUMP is bound by residues 166-169 (RSAD), Asn177, and 207-209 (HLY). A (6R)-5,10-methylene-5,6,7,8-tetrahydrofolate-binding site is contributed by Asp169. Position 263 (Ala263) interacts with (6R)-5,10-methylene-5,6,7,8-tetrahydrofolate.

This sequence belongs to the thymidylate synthase family. Bacterial-type ThyA subfamily. In terms of assembly, homodimer.

Its subcellular location is the cytoplasm. The catalysed reaction is dUMP + (6R)-5,10-methylene-5,6,7,8-tetrahydrofolate = 7,8-dihydrofolate + dTMP. It functions in the pathway pyrimidine metabolism; dTTP biosynthesis. Its function is as follows. Catalyzes the reductive methylation of 2'-deoxyuridine-5'-monophosphate (dUMP) to 2'-deoxythymidine-5'-monophosphate (dTMP) while utilizing 5,10-methylenetetrahydrofolate (mTHF) as the methyl donor and reductant in the reaction, yielding dihydrofolate (DHF) as a by-product. This enzymatic reaction provides an intracellular de novo source of dTMP, an essential precursor for DNA biosynthesis. The protein is Thymidylate synthase of Rhizobium johnstonii (strain DSM 114642 / LMG 32736 / 3841) (Rhizobium leguminosarum bv. viciae).